The sequence spans 344 residues: Succinylglutamate desuccinylase (344 aa).

Zn(2+) contacts are provided by H63, E66, and H160. The active site involves E224.

It belongs to the AspA/AstE family. Succinylglutamate desuccinylase subfamily. Zn(2+) is required as a cofactor.

It carries out the reaction N-succinyl-L-glutamate + H2O = L-glutamate + succinate. The protein operates within amino-acid degradation; L-arginine degradation via AST pathway; L-glutamate and succinate from L-arginine: step 5/5. Its function is as follows. Transforms N(2)-succinylglutamate into succinate and glutamate. This is Succinylglutamate desuccinylase from Shewanella putrefaciens (strain CN-32 / ATCC BAA-453).